Reading from the N-terminus, the 356-residue chain is tRNA-specific 2-thiouridylase MnmA (356 aa).

ATP is bound by residues 8–15 (GMSGGVDS) and Met34. Cys103 acts as the Nucleophile in catalysis. Cys103 and Cys199 are oxidised to a cystine. Gly127 serves as a coordination point for ATP. Positions 149-151 (KDQ) are interaction with tRNA. Cys199 functions as the Cysteine persulfide intermediate in the catalytic mechanism. Residues 305-306 (RY) form an interaction with tRNA region.

This sequence belongs to the MnmA/TRMU family.

It is found in the cytoplasm. The catalysed reaction is S-sulfanyl-L-cysteinyl-[protein] + uridine(34) in tRNA + AH2 + ATP = 2-thiouridine(34) in tRNA + L-cysteinyl-[protein] + A + AMP + diphosphate + H(+). Its function is as follows. Catalyzes the 2-thiolation of uridine at the wobble position (U34) of tRNA, leading to the formation of s(2)U34. This chain is tRNA-specific 2-thiouridylase MnmA, found in Clostridium kluyveri (strain ATCC 8527 / DSM 555 / NBRC 12016 / NCIMB 10680 / K1).